The sequence spans 97 residues: Acylphosphatase (97 aa).

Residues 7–97 (RLTAWVHGHV…QERFEGFVER (91 aa)) enclose the Acylphosphatase-like domain. Catalysis depends on residues arginine 22 and asparagine 40.

It belongs to the acylphosphatase family.

It catalyses the reaction an acyl phosphate + H2O = a carboxylate + phosphate + H(+). The chain is Acylphosphatase (acyP) from Mycobacterium avium (strain 104).